The primary structure comprises 135 residues: Protein NrdI (135 aa).

It belongs to the NrdI family.

Probably involved in ribonucleotide reductase function. The protein is Protein NrdI of Salmonella gallinarum (strain 287/91 / NCTC 13346).